The chain runs to 361 residues: 3-dehydroquinate synthase (361 aa).

NAD(+) contacts are provided by residues 69–74 (DGEEYK), 103–107 (GVIGD), 127–128 (TT), Lys-140, Lys-149, and 167–170 (TLDT). Residues Glu-182, His-245, and His-262 each contribute to the Zn(2+) site.

The protein belongs to the sugar phosphate cyclases superfamily. Dehydroquinate synthase family. Co(2+) serves as cofactor. The cofactor is Zn(2+). NAD(+) is required as a cofactor.

It is found in the cytoplasm. The enzyme catalyses 7-phospho-2-dehydro-3-deoxy-D-arabino-heptonate = 3-dehydroquinate + phosphate. It participates in metabolic intermediate biosynthesis; chorismate biosynthesis; chorismate from D-erythrose 4-phosphate and phosphoenolpyruvate: step 2/7. Catalyzes the conversion of 3-deoxy-D-arabino-heptulosonate 7-phosphate (DAHP) to dehydroquinate (DHQ). In Thioalkalivibrio sulfidiphilus (strain HL-EbGR7), this protein is 3-dehydroquinate synthase.